A 554-amino-acid chain; its full sequence is Valerianol synthase TPS1B (554 aa).

Mg(2+)-binding residues include Asp-307 and Asp-311. The short motif at 326–330 (VQRWD) is the DDXXD motif element. Mg(2+)-binding residues include Asp-452, Ser-456, and Glu-460.

Belongs to the terpene synthase family. It depends on Mg(2+) as a cofactor.

The enzyme catalyses (2E,6E)-farnesyl diphosphate + H2O = valerianol + diphosphate. Its pathway is secondary metabolite biosynthesis; terpenoid biosynthesis. Its function is as follows. Terpene synthase that catalyzes the biosynthesis of the terpene valerianol, which is a volatile compound of floral scent. The protein is Valerianol synthase TPS1B of Camellia hiemalis (Camellia).